The following is a 365-amino-acid chain: Glycolaldehyde reductase (365 aa).

8 residues coordinate NAD(+): D37, G94, K95, T116, S119, S125, L127, and Y131. Residues D171, H254, and H271 each contribute to the Zn(2+) site.

The protein belongs to the iron-containing alcohol dehydrogenase family. Zn(2+) is required as a cofactor.

It carries out the reaction ethylene glycol + NAD(+) = glycolaldehyde + NADH + H(+). Its activity is regulated as follows. Is subject to substrate inhibition. In terms of biological role, oxidoreductase involved in the non-carboxylating pentose bisphosphate pathway, a nucleoside degradation pathway present in some halophilic archaea. Catalyzes the reduction of glycolaldehyde to ethylene glycol. Cannot catalyze the oxidation of glycerol 1-phosphate nor the reduction of dihydroxyacetone phosphate (DHAP). This chain is Glycolaldehyde reductase, found in Halobacterium salinarum (strain ATCC 700922 / JCM 11081 / NRC-1) (Halobacterium halobium).